Reading from the N-terminus, the 430-residue chain is Histidinol dehydrogenase (430 aa).

Substrate-binding residues include S237, Q259, and H262. Residues Q259 and H262 each coordinate Zn(2+). Residues E327 and H328 each act as proton acceptor in the active site. Substrate contacts are provided by H328, D361, E415, and H420. Residue D361 participates in Zn(2+) binding. H420 contributes to the Zn(2+) binding site.

It belongs to the histidinol dehydrogenase family. Requires Zn(2+) as cofactor.

It carries out the reaction L-histidinol + 2 NAD(+) + H2O = L-histidine + 2 NADH + 3 H(+). Its pathway is amino-acid biosynthesis; L-histidine biosynthesis; L-histidine from 5-phospho-alpha-D-ribose 1-diphosphate: step 9/9. Functionally, catalyzes the sequential NAD-dependent oxidations of L-histidinol to L-histidinaldehyde and then to L-histidine. The protein is Histidinol dehydrogenase of Mesorhizobium japonicum (strain LMG 29417 / CECT 9101 / MAFF 303099) (Mesorhizobium loti (strain MAFF 303099)).